A 253-amino-acid polypeptide reads, in one-letter code: Sortase SrtE2 (253 aa).

Positions 1 to 11 (MAATTDTEHQE) are enriched in basic and acidic residues. Residues 1–23 (MAATTDTEHQEQAGTGGRGRRRP) are disordered. The chain crosses the membrane as a helical span at residues 30 to 50 (AVSVLGELLITAGLVMGLFVV). Residues 69-89 (EKVRDDWAQDRVGGSGQDGPG) are disordered. C220 is a catalytic residue.

It belongs to the bacterial sortase family. Class E subfamily.

It is found in the cell membrane. It catalyses the reaction The enzyme catalyzes a cell wall sorting reaction in which a surface protein with a sorting signal containing a LPXTG motif is cleaved between the Thr and Gly residue. The resulting threonine carboxyl end of the protein is covalently attached to a pentaglycine cross-bridge of peptidoglycan.. Transpeptidase that anchors surface proteins to the cell wall. Recognizes Leu-Ala-x-Thr-Gly and Leu-Pro-x-Thr-Gly, with a preference for the former. Unlike the S.aureus sortase it cleaves not only the Thr-Gly motif but also the Ala-X bond; an Ala-Glu bond is a better substrate than the Thr-Gly motif in vitro. Among its possible substrates are the chaplins ChpA, ChpB and ChpC; this enzyme is more important for ChpC attachment than is SrtE1. A double knockout mutant of srtE1 and srtE2 shows a developmental defect in aerial hyphae formation more dramatic than that due to chaplin deletion. This chain is Sortase SrtE2, found in Streptomyces coelicolor (strain ATCC BAA-471 / A3(2) / M145).